Consider the following 368-residue polypeptide: Biotin synthase (368 aa).

Residues 74-309 (CCGNVVDLCS…QQILRYAGGR (236 aa)) enclose the Radical SAM core domain. The [4Fe-4S] cluster site is built by C92, C96, and C99. C137, C174, C234, and R304 together coordinate [2Fe-2S] cluster.

It belongs to the radical SAM superfamily. Biotin synthase family. As to quaternary structure, homodimer. The cofactor is [4Fe-4S] cluster. [2Fe-2S] cluster serves as cofactor.

It carries out the reaction (4R,5S)-dethiobiotin + (sulfur carrier)-SH + 2 reduced [2Fe-2S]-[ferredoxin] + 2 S-adenosyl-L-methionine = (sulfur carrier)-H + biotin + 2 5'-deoxyadenosine + 2 L-methionine + 2 oxidized [2Fe-2S]-[ferredoxin]. The protein operates within cofactor biosynthesis; biotin biosynthesis; biotin from 7,8-diaminononanoate: step 2/2. Functionally, catalyzes the conversion of dethiobiotin (DTB) to biotin by the insertion of a sulfur atom into dethiobiotin via a radical-based mechanism. This is Biotin synthase from Rippkaea orientalis (strain PCC 8801 / RF-1) (Cyanothece sp. (strain PCC 8801)).